Here is a 568-residue protein sequence, read N- to C-terminus: Sentrin-specific protease 3 (568 aa).

The disordered stretch occupies residues 1-119; sequence MKETIQGTGS…PSHRKTCSQR (119 aa). Ser-52, Ser-71, and Ser-73 each carry phosphoserine. Over residues 72-87 the composition is skewed to acidic residues; sequence ASEEEEEEEEEDEEEV. Over residues 106–119 the composition is skewed to basic residues; that stretch reads RALRPSHRKTCSQR. 2 short sequence motifs (nuclear localization signal) span residues 119–122 and 147–153; these read RRRR and RHRGRRR. Residues 155-174 are disordered; it reads LAHPKNHLSPQEGGATPQVP. Ser-163 carries the post-translational modification Phosphoserine. Thr-170 is modified (phosphothreonine). 4 positions are modified to phosphoserine: Ser-175, Ser-182, Ser-206, and Ser-226. A protease region spans residues 380–537; that stretch reads HVLTMDDLGT…AFVLQYCKHL (158 aa). Residues His-459 and Asp-476 contribute to the active site. The active-site Nucleophile is Cys-526.

The protein belongs to the peptidase C48 family. Component of some MLL1/MLL complex, at least composed of the core components KMT2A/MLL1, ASH2L, HCFC1/HCF1, WDR5 and RBBP5, as well as the facultative components BACC1, CHD8, E2F6, HSP70, INO80C, KANSL1, LAS1L, MAX, MCRS1, MGA, MYST1/MOF, PELP1, PHF20, PRP31, RING2, RUVB1/TIP49A, RUVB2/TIP49B, SENP3, TAF1, TAF4, TAF6, TAF7, TAF9 and TEX10. Interacts with EP300, NPM1 and CDCA8. Component of the 5FMC complex, at least composed of PELP1, LAS1L, TEX10, WDR18 and SENP3; the complex interacts with methylated CHTOP and ZNF148. Interacts with NOL9. Interacts with CCAR2.

The protein resides in the nucleus. It is found in the nucleolus. It localises to the nucleoplasm. Its subcellular location is the cytoplasm. On oxidative stress, SENP3 degradation is blocked by inhibition of its ubiquitination, which stabilizes it as it accumulates in the nucleoplasm. Protease that releases SUMO2 and SUMO3 monomers from sumoylated substrates, but has only weak activity against SUMO1 conjugates. Deconjugates SUMO2 from MEF2D, which increases its transcriptional activation capability. Deconjugates SUMO2 and SUMO3 from CDCA8. Redox sensor that, when redistributed into nucleoplasm, can act as an effector to enhance HIF1A transcriptional activity by desumoylating EP300. Required for rRNA processing through deconjugation of SUMO2 and SUMO3 from nucleophosmin, NPM1. Plays a role in the regulation of sumoylation status of ZNF148. Functions as a component of the Five Friends of Methylated CHTOP (5FMC) complex; the 5FMC complex is recruited to ZNF148 by methylated CHTOP, leading to desumoylation of ZNF148 and subsequent transactivation of ZNF148 target genes. Deconjugates SUMO2 from KAT5. Catalyzes desumoylation of MRE11. In Mus musculus (Mouse), this protein is Sentrin-specific protease 3 (Senp3).